A 640-amino-acid polypeptide reads, in one-letter code: Spindle assembly abnormal protein 6 homolog (640 aa).

Residues 40 to 92 enclose the PISA domain; the sequence is VHKKDLAVRLTDDADPFFLYNLVISEEDFQSLKSQQGLLVDFSAFPQKFIDLL. A coiled-coil region spans residues 154-475; the sequence is LARCLKCLKE…KQLLKTNENV (322 aa).

In terms of assembly, nine homodimers form a cartwheel structure with an internal diameter of 23 nM and radial spokes connecting to the microtubule triplets.

Its subcellular location is the cytoplasm. It localises to the cytoskeleton. The protein localises to the microtubule organizing center. The protein resides in the centrosome. Its function is as follows. Central scaffolding component of the centrioles ensuring their 9-fold symmetry. Required for centrosome biogenesis and duplication: required both for mother-centriole-dependent centriole duplication and deuterosome-dependent centriole amplification in multiciliated cells. The polypeptide is Spindle assembly abnormal protein 6 homolog (SASS6) (Gallus gallus (Chicken)).